Here is a 436-residue protein sequence, read N- to C-terminus: Histidine--tRNA ligase (436 aa).

Belongs to the class-II aminoacyl-tRNA synthetase family. As to quaternary structure, homodimer.

It localises to the cytoplasm. It catalyses the reaction tRNA(His) + L-histidine + ATP = L-histidyl-tRNA(His) + AMP + diphosphate + H(+). This chain is Histidine--tRNA ligase, found in Prochlorococcus marinus (strain MIT 9313).